Here is a 153-residue protein sequence, read N- to C-terminus: Large ribosomal subunit protein uL13 (153 aa).

The protein belongs to the universal ribosomal protein uL13 family. As to quaternary structure, part of the 50S ribosomal subunit.

Its function is as follows. This protein is one of the early assembly proteins of the 50S ribosomal subunit, although it is not seen to bind rRNA by itself. It is important during the early stages of 50S assembly. The polypeptide is Large ribosomal subunit protein uL13 (Methylobacterium nodulans (strain LMG 21967 / CNCM I-2342 / ORS 2060)).